The primary structure comprises 613 residues: MLGAIGVVFGDIGTSPLYALKECFNPEHGVPFSTQTVYGVLSMLFWSMTLVVSIKYVVFVMRADNNGEGGILALTALAMRASSGGARTIRTLMLLGLLGASMFYGDAVITPAISVLSAVEGMEVMTPALQPWVLPLSLIVLVGLFLLQKHGTHVVGRLFGPVMLFWFVLLGLIGLFSVLRSPQILVALNPVHAIEFMFRHAVQAFIVFGSVFLALTGAEALYADMGHFGARPIRYAWFYIAMPCLLLNYFGQGALLLREPSALQNPFFLLMPTWAVAPTIVLATAATVIASQAVISGAFSMTAQAVHLGYAPRMKILYTSDVEIGQIYVPVVNYALLLLVVAVVLAFGKSDNLAAAYGIAVTTTMLLTTGLVTVVMRNAWKWSLPAVALLGTVFLAVDLSFFGANLLKVAAGGWFPLLLGGLIFFLMVTWHTGTQLLKARNVEGGIPLEPFMEGLLSHPPYRVDGTAVYLTPSIEFVPLALLHNLKHNHVLHSRVLFIHFRTQAVPYVEPAKRLVVKTIGDNLYAVAADFGFKETPAVDEIVRMVGERLGIVFEDMETSFFITRATVVPSQLPGMAMWREALFAWMQHNSAKPSDFFRIPANRLVELGSKVEI.

A run of 12 helical transmembrane segments spans residues 40-60 (VLSM…VVFV), 93-113 (MLLG…TPAI), 127-147 (PALQ…LFLL), 158-178 (LFGP…LFSV), 201-221 (AVQA…AEAL), 237-257 (WFYI…ALLL), 266-286 (PFFL…ATAA), 288-308 (VIAS…AVHL), 327-347 (IYVP…VLAF), 356-376 (AYGI…TVVM), 384-404 (LPAV…FFGA), and 409-429 (VAAG…LMVT).

Belongs to the HAK/KUP transporter (TC 2.A.72) family.

It localises to the cell inner membrane. It catalyses the reaction K(+)(in) + H(+)(in) = K(+)(out) + H(+)(out). Its function is as follows. Transport of potassium into the cell. Likely operates as a K(+):H(+) symporter. The sequence is that of Probable potassium transport system protein Kup 1 from Ralstonia nicotianae (strain ATCC BAA-1114 / GMI1000) (Ralstonia solanacearum).